The primary structure comprises 480 residues: Aspartyl/glutamyl-tRNA(Asn/Gln) amidotransferase subunit B (480 aa).

This sequence belongs to the GatB/GatE family. GatB subfamily. In terms of assembly, heterotrimer of A, B and C subunits.

It carries out the reaction L-glutamyl-tRNA(Gln) + L-glutamine + ATP + H2O = L-glutaminyl-tRNA(Gln) + L-glutamate + ADP + phosphate + H(+). The enzyme catalyses L-aspartyl-tRNA(Asn) + L-glutamine + ATP + H2O = L-asparaginyl-tRNA(Asn) + L-glutamate + ADP + phosphate + 2 H(+). Its function is as follows. Allows the formation of correctly charged Asn-tRNA(Asn) or Gln-tRNA(Gln) through the transamidation of misacylated Asp-tRNA(Asn) or Glu-tRNA(Gln) in organisms which lack either or both of asparaginyl-tRNA or glutaminyl-tRNA synthetases. The reaction takes place in the presence of glutamine and ATP through an activated phospho-Asp-tRNA(Asn) or phospho-Glu-tRNA(Gln). The protein is Aspartyl/glutamyl-tRNA(Asn/Gln) amidotransferase subunit B of Streptococcus pneumoniae (strain P1031).